A 418-amino-acid chain; its full sequence is MNKFIIKGGETLNGEVDISCAKNSVLPIIAATILCGEKCTIKNCPMLLDVFVISDLLKSIGAQVDIDLNSGDMKIDTSNVKSIEPDAELVRKMRGSFLIMGPMISRYGRFKISLPGGCNIGTRPIDLHLKGLKALGVNIEIGHGYVEANAAKLLGDRIYLDFPSVGATENIIMASVFAEGETIIENAAQEPEIDDLINFLNKMGSDIKKIETGAIIIRGVKELKGIKYTPIYDRIEAGTFIIAAAITKSKIKINGVEEKSIKPMIAKFCEMGINMEIDGKSLIIDGRNELKPVDIKTMPYPGFPTDMQAQIMSLLCCTEGTSVITETIFENRFMHVPELKRFGANIKIDGRSAVIVGVKELTGCSARATDLRAGAALILAGLVAEGETQISDIYHVDRGYVSIEKKLTKLGAKIERVE.

22-23 (KN) contributes to the phosphoenolpyruvate binding site. Arg94 is a binding site for UDP-N-acetyl-alpha-D-glucosamine. Residue Cys118 is the Proton donor of the active site. Cys118 carries the post-translational modification 2-(S-cysteinyl)pyruvic acid O-phosphothioketal. UDP-N-acetyl-alpha-D-glucosamine contacts are provided by residues 123-127 (RPIDL), Asp306, and Ile328.

It belongs to the EPSP synthase family. MurA subfamily.

It localises to the cytoplasm. The enzyme catalyses phosphoenolpyruvate + UDP-N-acetyl-alpha-D-glucosamine = UDP-N-acetyl-3-O-(1-carboxyvinyl)-alpha-D-glucosamine + phosphate. It participates in cell wall biogenesis; peptidoglycan biosynthesis. In terms of biological role, cell wall formation. Adds enolpyruvyl to UDP-N-acetylglucosamine. This chain is UDP-N-acetylglucosamine 1-carboxyvinyltransferase 1, found in Clostridium acetobutylicum (strain ATCC 824 / DSM 792 / JCM 1419 / IAM 19013 / LMG 5710 / NBRC 13948 / NRRL B-527 / VKM B-1787 / 2291 / W).